A 222-amino-acid chain; its full sequence is Probable GTP-binding protein EngB (222 aa).

One can recognise an EngB-type G domain in the interval 22–197; sequence TSAEIAFVGR…ETVVAGWFAG (176 aa). Residues serine 37 and threonine 59 each coordinate Mg(2+). The tract at residues 201-222 is disordered; it reads RQADELTDGEPDDRTPDPDSAS. A compositionally biased stretch (basic and acidic residues) spans 212-222; it reads DDRTPDPDSAS.

It belongs to the TRAFAC class TrmE-Era-EngA-EngB-Septin-like GTPase superfamily. EngB GTPase family. Mg(2+) is required as a cofactor.

In terms of biological role, necessary for normal cell division and for the maintenance of normal septation. This is Probable GTP-binding protein EngB from Laribacter hongkongensis (strain HLHK9).